A 492-amino-acid chain; its full sequence is Beta-glucosidase 38 (492 aa).

An N-terminal signal peptide occupies residues 1–21; that stretch reads MNMPLLLLIAIVVVSLSHGNG. Residue Gln-45 coordinates a beta-D-glucoside. 2 N-linked (GlcNAc...) asparagine glycosylation sites follow: Asn-73 and Asn-77. A beta-D-glucoside is bound by residues His-146 and 191-192; that span reads NE. Glu-192 functions as the Proton donor in the catalytic mechanism. The cysteines at positions 211 and 214 are disulfide-linked. Residue Asn-310 is glycosylated (N-linked (GlcNAc...) asparagine). Residue Tyr-331 coordinates a beta-D-glucoside. An N-linked (GlcNAc...) asparagine glycan is attached at Asn-341. A beta-D-glucoside is bound at residue Glu-400. Residue Glu-400 is the Nucleophile of the active site. N-linked (GlcNAc...) asparagine glycosylation occurs at Asn-408. A beta-D-glucoside contacts are provided by residues Trp-447, 454-455, and Phe-463; that span reads EW.

It belongs to the glycosyl hydrolase 1 family.

The enzyme catalyses Hydrolysis of terminal, non-reducing beta-D-glucosyl residues with release of beta-D-glucose.. The sequence is that of Beta-glucosidase 38 (BGLU38) from Oryza sativa subsp. japonica (Rice).